Consider the following 449-residue polypeptide: Chitobiosyldiphosphodolichol beta-mannosyltransferase (449 aa).

Topologically, residues 1–7 (MFLEIPR) are lumenal. Residues 8-28 (WLLALIILYLSIPLVVYYVIP) form a helical membrane-spanning segment. Positions 21–32 (LVVYYVIPYLFY) match the Dolichol recognition motif. Residues 29-104 (YLFYGNKSTK…SNLKRKGGGT (76 aa)) lie on the Cytoplasmic side of the membrane. The helical intramembrane region spans 105-125 (SVIFMVKKVLFQVLSIFKLLW). At 126-449 (ELRGSDYILV…RTMRDLKLIH (324 aa)) the chain is on the cytoplasmic side. Residues 435–449 (QSNWERTMRDLKLIH) are required for oligomerization.

The protein belongs to the glycosyltransferase group 1 family. Glycosyltransferase 33 subfamily. As to quaternary structure, homodimer. ALG1 forms mannosyltransferases (MT) heteromeric complexes with either ALG2 or ALG11.

The protein resides in the endoplasmic reticulum membrane. It catalyses the reaction an N,N'-diacetylchitobiosyl-diphospho-di-trans,poly-cis-dolichol + GDP-alpha-D-mannose = a beta-D-Man-(1-&gt;4)-beta-D-GlcNAc-(1-&gt;4)-alpha-D-GlcNAc-diphospho-di-trans,poly-cis-dolichol + GDP + H(+). It functions in the pathway protein modification; protein glycosylation. Participates in the formation of the lipid-linked precursor oligosaccharide for N-glycosylation. Involved in assembling the dolichol-pyrophosphate-GlcNAc(2)-Man(5) intermediate on the cytoplasmic surface of the ER. The polypeptide is Chitobiosyldiphosphodolichol beta-mannosyltransferase (ALG1) (Saccharomyces cerevisiae (strain ATCC 204508 / S288c) (Baker's yeast)).